We begin with the raw amino-acid sequence, 118 residues long: Large ribosomal subunit protein eL18 (118 aa).

Belongs to the eukaryotic ribosomal protein eL18 family.

This chain is Large ribosomal subunit protein eL18, found in Sulfurisphaera tokodaii (strain DSM 16993 / JCM 10545 / NBRC 100140 / 7) (Sulfolobus tokodaii).